The chain runs to 272 residues: Ribosomal RNA small subunit methyltransferase A (272 aa).

S-adenosyl-L-methionine is bound by residues N18, L20, G45, E66, D91, and N113.

The protein belongs to the class I-like SAM-binding methyltransferase superfamily. rRNA adenine N(6)-methyltransferase family. RsmA subfamily.

It localises to the cytoplasm. It carries out the reaction adenosine(1518)/adenosine(1519) in 16S rRNA + 4 S-adenosyl-L-methionine = N(6)-dimethyladenosine(1518)/N(6)-dimethyladenosine(1519) in 16S rRNA + 4 S-adenosyl-L-homocysteine + 4 H(+). In terms of biological role, specifically dimethylates two adjacent adenosines (A1518 and A1519) in the loop of a conserved hairpin near the 3'-end of 16S rRNA in the 30S particle. May play a critical role in biogenesis of 30S subunits. This is Ribosomal RNA small subunit methyltransferase A from Proteus mirabilis (strain HI4320).